A 156-amino-acid polypeptide reads, in one-letter code: Snaclec rhinocetin subunit alpha (156 aa).

A signal peptide spans 1 to 23; sequence MGRFIFLSSGWLVVFLSLSGTGA. 3 cysteine pairs are disulfide-bonded: cysteine 27-cysteine 38, cysteine 55-cysteine 150, and cysteine 125-cysteine 142. One can recognise a C-type lectin domain in the interval 34-151; sequence YEGHCYKFFF…CGDNYPFVCM (118 aa).

The protein belongs to the snaclec family. Heterodimer; disulfide-linked. As to expression, expressed by the venom gland.

The protein resides in the secreted. Functionally, antagonist of the alpha-2 subunit of the integrin alpha-2/beta-1 (ITGA2/ITGB1) on human platelets and endothelial cells. This protein inhibits collagen-stimulated activation of human platelets in a dose-dependent manner. In addition, it antagonizes the binding of monoclonal antibodies against the alpha-2 subunit of integrin alpha-2/beta-1 to platelets and it coimmunoprecipitates with this integrin. This Bitis rhinoceros (West African gaboon viper) protein is Snaclec rhinocetin subunit alpha.